The primary structure comprises 153 residues: Pheromone-binding protein Gp-9 (153 aa).

The signal sequence occupies residues 1-19 (MKTLILHICIFALVAFASA). 3 disulfides stabilise this stretch: Cys-37-Cys-77, Cys-73-Cys-129, and Cys-118-Cys-138.

The protein belongs to the PBP/GOBP family. In terms of assembly, homodimer.

Its subcellular location is the secreted. Its function is as follows. Colony queen number, a major feature of social organization, is associated with worker genotype for Gp-9. Colonies are headed by either a single reproductive queen (monogyne form) or multiple queens (polygyne form). Differences in worker Gp-9 genotypes between social forms may cause differences in workers' abilities to recognize queens and regulate their numbers. This Solenopsis nigella gensterblumi (Fire ant) protein is Pheromone-binding protein Gp-9.